We begin with the raw amino-acid sequence, 182 residues long: Negative transcriptional regulator PadR (182 aa).

Belongs to the PadR family. Homodimer.

The protein localises to the cytoplasm. With respect to regulation, padR repressor activity is inhibited in the presence of phenolic acids, which directly modulate PadR binding to the promoter of padC, leading to the dissociation of PadR from the operator DNA and expression of padC. In the presence of MgCl(2), binding is not altered by phenolic acids. Functionally, transcriptional regulator involved in the regulation of the metabolism of phenolic acids. In the absence of phenolic acids, represses the expression of padC, which encodes a phenolic acid decarboxylase (PAD) involved in the detoxification of harmful phenolic acids. Acts by binding to the padC promoter region, preventing the transcription of the gene. The chain is Negative transcriptional regulator PadR from Bacillus subtilis (strain 168).